A 53-amino-acid chain; its full sequence is UPF0391 membrane protein YPTS_0599 (53 aa).

Helical transmembrane passes span 4–24 (WGIIFLIIALIAAALGFGGLA) and 27–47 (AAWAAKVVFVVGIILFLISLF).

Belongs to the UPF0391 family.

The protein resides in the cell membrane. In Yersinia pseudotuberculosis serotype IB (strain PB1/+), this protein is UPF0391 membrane protein YPTS_0599.